The following is a 1067-amino-acid chain: DNA-directed RNA polymerase subunit beta (1067 aa).

Belongs to the RNA polymerase beta chain family. As to quaternary structure, in plastids the minimal PEP RNA polymerase catalytic core is composed of four subunits: alpha, beta, beta', and beta''. When a (nuclear-encoded) sigma factor is associated with the core the holoenzyme is formed, which can initiate transcription.

The protein resides in the plastid. It is found in the chloroplast. It catalyses the reaction RNA(n) + a ribonucleoside 5'-triphosphate = RNA(n+1) + diphosphate. DNA-dependent RNA polymerase catalyzes the transcription of DNA into RNA using the four ribonucleoside triphosphates as substrates. This is DNA-directed RNA polymerase subunit beta from Ipomoea purpurea (Common morning glory).